The chain runs to 159 residues: Protein-export protein SecB (159 aa).

The protein belongs to the SecB family. In terms of assembly, homotetramer, a dimer of dimers. One homotetramer interacts with 1 SecA dimer.

Its subcellular location is the cytoplasm. Functionally, one of the proteins required for the normal export of preproteins out of the cell cytoplasm. It is a molecular chaperone that binds to a subset of precursor proteins, maintaining them in a translocation-competent state. It also specifically binds to its receptor SecA. This chain is Protein-export protein SecB, found in Pseudomonas fluorescens (strain SBW25).